The primary structure comprises 867 residues: Retinoblastoma-related protein 1 (867 aa).

The segment at 275-476 (TPVTSAMTTA…EKGSSLYNSL (202 aa)) is domain A. The tract at residues 275–722 (TPVTSAMTTA…NEVFVPAAKP (448 aa)) is pocket; binds RPD3I and RBAP1. Positions 477–594 (IVARPSVASE…PVGGNEKCAD (118 aa)) are spacer. The segment at 512 to 563 (EGLPATPSKKRAAGPDDNADPRSPKRSCNESRNTVVERNLQTPPPKQSHMVS) is disordered. The span at 530–540 (ADPRSPKRSCN) shows a compositional bias: basic and acidic residues. Over residues 541–552 (ESRNTVVERNLQ) the composition is skewed to polar residues. The domain B stretch occupies residues 595–722 (VTIHIFFSKI…NEVFVPAAKP (128 aa)). Disordered regions lie at residues 734-762 (PEDK…MSPK) and 843-867 (QING…ETDT).

The protein belongs to the retinoblastoma protein (RB) family. Interacts with RPD3I, RBAP1, the Arabidopsis cyclin CYCD3-1, the mastrevirus replication-associated protein A (RepA) and the begomovirus replication-associated protein (Rep). In terms of tissue distribution, ubiquitous.

Its subcellular location is the nucleus. Functionally, regulator of biological processes that recruits a histone deacetylase to control gene transcription. May play a role in the entry into mitosis, negatively regulating the cell proliferation. Formation of stable complexes with geminiviridae replication-associated proteins may create a cellular environment which favors viral DNA replication. This Zea mays (Maize) protein is Retinoblastoma-related protein 1 (RBR1).